Here is a 611-residue protein sequence, read N- to C-terminus: Procollagen galactosyltransferase 1-A (611 aa).

Positions 1 to 24 (MSQAGVDRLLRGLQLLLLVLRLSA) are cleaved as a signal peptide. N85, N173, N312, N370, and N568 each carry an N-linked (GlcNAc...) asparagine glycan. The span at 575 to 591 (WDRAKSRKTQQQEKLRS) shows a compositional bias: basic and acidic residues. A disordered region spans residues 575 to 611 (WDRAKSRKTQQQEKLRSEALNSPSLGSPFDNTARDEL). The Prevents secretion from ER motif lies at 608–611 (RDEL).

Belongs to the glycosyltransferase 25 family.

The protein localises to the endoplasmic reticulum lumen. The catalysed reaction is (5R)-5-hydroxy-L-lysyl-[collagen] + UDP-alpha-D-galactose = (5R)-5-O-(beta-D-galactosyl)-5-hydroxy-L-lysyl-[collagen] + UDP + H(+). Its function is as follows. Beta-galactosyltransferase that transfers beta-galactose to hydroxylysine residues of type I collagen. By acting on collagen glycosylation, facilitates the formation of collagen triple helix. This Xenopus laevis (African clawed frog) protein is Procollagen galactosyltransferase 1-A (colgalt1-a).